The sequence spans 241 residues: Octanoyltransferase (241 aa).

The BPL/LPL catalytic domain occupies 50–238 (KIAHEQVWLL…AFEQIFGPTI (189 aa)). Substrate contacts are provided by residues 89 to 96 (RGGEFTYH), 169 to 171 (AIG), and 182 to 184 (GIS). Cys-200 (acyl-thioester intermediate) is an active-site residue.

This sequence belongs to the LipB family.

The protein resides in the cytoplasm. The catalysed reaction is octanoyl-[ACP] + L-lysyl-[protein] = N(6)-octanoyl-L-lysyl-[protein] + holo-[ACP] + H(+). Its pathway is protein modification; protein lipoylation via endogenous pathway; protein N(6)-(lipoyl)lysine from octanoyl-[acyl-carrier-protein]: step 1/2. In terms of biological role, catalyzes the transfer of endogenously produced octanoic acid from octanoyl-acyl-carrier-protein onto the lipoyl domains of lipoate-dependent enzymes. Lipoyl-ACP can also act as a substrate although octanoyl-ACP is likely to be the physiological substrate. This Bartonella bacilliformis (strain ATCC 35685 / KC583 / Herrer 020/F12,63) protein is Octanoyltransferase.